Here is a 198-residue protein sequence, read N- to C-terminus: Imidazoleglycerol-phosphate dehydratase (198 aa).

This sequence belongs to the imidazoleglycerol-phosphate dehydratase family.

Its subcellular location is the cytoplasm. It carries out the reaction D-erythro-1-(imidazol-4-yl)glycerol 3-phosphate = 3-(imidazol-4-yl)-2-oxopropyl phosphate + H2O. Its pathway is amino-acid biosynthesis; L-histidine biosynthesis; L-histidine from 5-phospho-alpha-D-ribose 1-diphosphate: step 6/9. The chain is Imidazoleglycerol-phosphate dehydratase from Gluconobacter oxydans (strain 621H) (Gluconobacter suboxydans).